A 247-amino-acid polypeptide reads, in one-letter code: Probable transcriptional regulatory protein GM21_0933 (247 aa).

Belongs to the TACO1 family.

It is found in the cytoplasm. The protein is Probable transcriptional regulatory protein GM21_0933 of Geobacter sp. (strain M21).